A 325-amino-acid polypeptide reads, in one-letter code: Serine/threonine-protein kinase CtkA (325 aa).

ATP-binding positions include 21-24 (NGNK), K37, Q72, and 88-90 (KDF). Residues N160 and D179 each coordinate Mg(2+). ATP is bound at residue D179. The disordered stretch occupies residues 296-325 (QHKQAHSNPYDNADDLDNSNEYTPTPKRRR).

Post-translationally, autophosphorylates on either Thr-3 or Thr-7.

It is found in the secreted. It localises to the host cytoplasm. The protein localises to the host cytosol. Its subcellular location is the host nucleus. It catalyses the reaction L-seryl-[protein] + ATP = O-phospho-L-seryl-[protein] + ADP + H(+). The enzyme catalyses L-threonyl-[protein] + ATP = O-phospho-L-threonyl-[protein] + ADP + H(+). Its function is as follows. Virulence factor acting as a pro-inflammatory protein that induces the secretion of the pro-inflammatory cytokines TNF-alpha (tumor necrosis factor-alpha) and IL-8 (interleukin-8) from human macrophages, as well as enhanced translocation of the transcription factor NF-kappa-B complex in macrophages. Is a kinase capable of autophosphorylating itself at a threonine residue near the N-terminus. Also leads to enhanced phosphorylation of the NF-kappa-B p65 subunit (RELA) at 'Ser-276' in human epithelial cancer cells; its kinase activity is required for this enhanced phosphorylation that up-regulates NF-kappa-B activity, but it does not directly phosphorylate this protein. Thus, the kinase activity of CtkA may play an important role in the induction of host inflammatory responses during H.pylori infection. The protein is Serine/threonine-protein kinase CtkA (ctkA) of Helicobacter pylori (strain J99 / ATCC 700824) (Campylobacter pylori J99).